The chain runs to 37 residues: Hemextin A (37 aa).

Heterotetramer composed of two A and two B chains; non-covalently linked. Does not exist as a complex in the crude venom. Post-translationally, may contain several disulfide bonds. As to expression, expressed by the venom gland.

Its subcellular location is the secreted. In terms of biological role, hemextin A (monomer): exhibits mild anticoagulant activity. It specifically inhibits the activation of FX (F10) by the TF-FVIIa complex (extrinsic tenase complex (ETC)) by non-competitively inhibiting the enzymatic activity of FVIIa. Functionally, hemextin AB complex: specifically inhibits the activation of FX (F10) by the TF-FVIIa complex (extrinsic tenase complex (ETC)) (IC(50)= 100 nM, Ki=25 nM) by non-competitively inhibiting the enzymatic activity of FVIIa. This Hemachatus haemachatus (Rinkhals) protein is Hemextin A.